Here is a 245-residue protein sequence, read N- to C-terminus: Fibroblast growth factor 13 (245 aa).

The segment at 1–36 is disordered; the sequence is MAAAIASSLIRQKRQAREREKSNACKCVSSPSKGKT. The segment at 1–62 is mediates targeting to the nucleus; the sequence is MAAAIASSLI…GSKKRRRRRP (62 aa). The mediates interaction with sodium channels stretch occupies residues 67 to 201; sequence KGIVTKLYSR…AHFLPKPLKV (135 aa). Position 208 is a phosphoserine (serine 208). The segment at 213 to 245 is disordered; it reads TEFSRSGSGTPTKSRSVSGVLNGGKSMSHNEST. Over residues 215–245 the composition is skewed to polar residues; sequence FSRSGSGTPTKSRSVSGVLNGGKSMSHNEST.

The protein belongs to the heparin-binding growth factors family. Interacts with SCN8A; regulates SCN8A activity. Interacts with SCN1A; may regulate SCN1A activity. Interacts with SCN5A; the interaction is direct and may regulate SNC5A density at membranes and function. May also interact with SCN2A and SCN11A. Interacts with MAPK8IP2; may regulate the MAPK8IP2 scaffolding activity. Post-translationally, may be phosphorylated. As to expression, ubiquitously expressed. Predominantly expressed in the nervous system.

The protein localises to the nucleus. It is found in the cytoplasm. Its subcellular location is the cell projection. The protein resides in the filopodium. It localises to the growth cone. The protein localises to the dendrite. It is found in the cell membrane. Its subcellular location is the sarcolemma. Its function is as follows. Microtubule-binding protein which directly binds tubulin and is involved in both polymerization and stabilization of microtubules. Through its action on microtubules, may participate in the refinement of axons by negatively regulating axonal and leading processes branching. Plays a crucial role in neuron polarization and migration in the cerebral cortex and the hippocampus. Regulates voltage-gated sodium channel transport and function. May also play a role in MAPK signaling. Required for the development of axonal initial segment-targeting inhibitory GABAergic synapses made by chandelier neurons. The sequence is that of Fibroblast growth factor 13 from Homo sapiens (Human).